The primary structure comprises 179 residues: UPF0302 protein EF_1554 (179 aa).

Belongs to the UPF0302 family.

This Enterococcus faecalis (strain ATCC 700802 / V583) protein is UPF0302 protein EF_1554.